The primary structure comprises 49 residues: MFKRKSTAELAAQMAKLNGNKGFSSEDKGEWKLKLDNAGNGQAVIRFLP.

Homodimer in the absence of DNA, monomer when binding DNA.

In terms of biological role, binds preferentially to single-stranded DNA and therefore, destabilizes double-stranded DNA. It is involved in DNA replication, repair and recombination. Binds ss-DNA as the replication fork advances and stimulates the replisome processivity and accuracy. In Enterobacteria phage RB9 (Bacteriophage RB9), this protein is Single-stranded DNA-binding protein (32).